A 2333-amino-acid polypeptide reads, in one-letter code: Genome polyprotein (2333 aa).

Positions Met1 to Lys201 constitute a Peptidase C28 domain. The Cytoplasmic segment spans residues Met1–Leu1481. Active-site for leader protease activity residues include Cys51, His148, and Asp163. Disordered regions lie at residues Gln197–Asn218 and Gln238–Asn265. Residue Gly202 is the site of N-myristoyl glycine; by host attachment. Polar residues-rich tracts occupy residues Gly204–Asn218 and Gln238–Gly251. Residues Ser252–Asn265 show a composition bias toward low complexity. The antigenic epitope stretch occupies residues Ala789–Tyr797. A Cell attachment site motif is present at residues Arg869–Asp871. Positions Asn1190–Asp1354 constitute an SF3 helicase domain. An ATP-binding site is contributed by Gly1218–Ser1225. An intramembrane segment occupies Lys1482–Ile1502. Topologically, residues Arg1503–Ala2333 are cytoplasmic. Basic and acidic residues-rich tracts occupy residues Lys1530–Pro1539 and Phe1550–Glu1564. Residues Lys1530–Pro1585 form a disordered region. Residues Glu1567–Glu1579 show a composition bias toward low complexity. An O-(5'-phospho-RNA)-tyrosine mark is found at Tyr1582, Tyr1605, and Tyr1629. A Peptidase C3 domain is found at Ala1653 to Leu1849. His1696 (for protease 3C activity; Proton donor/acceptor) is an active-site residue. Residues Asp1734 and Cys1813 each act as for protease 3C activity in the active site. The short motif at Met1879 to Thr1887 is the Nuclear localization signal element. The 119-residue stretch at Arg2097–Ala2215 folds into the RdRp catalytic domain. The active-site For RdRp activity is the Asp2201.

The protein belongs to the picornaviruses polyprotein family. In terms of assembly, interacts with host ISG15. Interacts (via R-G-D motif) with host ITGAV/ITGB6. Interacts with host MAVS; this interaction inhibits binding of host TRAF3 to MAVS, thereby suppressing interferon-mediated responses. As to quaternary structure, forms homooligomers. In terms of assembly, homohexamer. Interacts with host VIM. Interacts with host BECN1. Interacts with host DCTN3. As to quaternary structure, interacts with RNA-dependent RNA polymerase; this interaction allows 3B-1 to binds 2 polymerases and act as a primer. It also allows the recruitment of the RNA-dependent RNA polymerase to host membranes. In terms of assembly, interacts with RNA-dependent RNA polymerase; this interaction allows 3B-2 to act as a primer. Interacts with RNA-dependent RNA polymerase; this interaction allows 3B-3 to act as a primer. As to quaternary structure, interacts with 3B-1; this interaction allows 3B-1 to binds 2 polymerases and act as a primer. It also allows the recruitment of the RNA-dependent RNA polymerase to host membranes. Interacts with 3B-2; this interaction allows 3B-2 to act as a primer. Interacts with 3B-3; this interaction allows 3B-3 to act as a primer. In terms of processing, removes six residues from its own C-terminus, generating sLb(pro). Post-translationally, specific enzymatic cleavages in vivo by the viral proteases yield a variety of precursors and mature proteins. The polyprotein seems to be cotranslationally cleaved at the 2A/2B junction by a ribosomal skip from one codon to the next without formation of a peptide bond. This process would release the L-P1-2A peptide from the translational complex. During virion maturation, immature virions are rendered infectious following cleavage of VP0 into VP4 and VP2. This maturation seems to be an autocatalytic event triggered by the presence of RNA in the capsid and is followed by a conformational change of the particle. In terms of processing, myristoylation is required during RNA encapsidation and formation of the mature virus particle. Post-translationally, uridylylated by the polymerase and covalently linked to the 5'-end of genomic RNA. These uridylylated forms act as a nucleotide-peptide primer for the polymerase.

The protein localises to the host nucleus. It localises to the host cytoplasm. It is found in the virion. The protein resides in the host endoplasmic reticulum membrane. Its subcellular location is the host cytoplasmic vesicle membrane. The enzyme catalyses Autocatalytically cleaves itself from the polyprotein of the foot-and-mouth disease virus by hydrolysis of a Lys-|-Gly bond, but then cleaves host cell initiation factor eIF-4G at bonds -Gly-|-Arg- and -Lys-|-Arg-.. It carries out the reaction a ribonucleoside 5'-triphosphate + H2O = a ribonucleoside 5'-diphosphate + phosphate + H(+). The catalysed reaction is RNA(n) + a ribonucleoside 5'-triphosphate = RNA(n+1) + diphosphate. It catalyses the reaction Selective cleavage of Gln-|-Gly bond in the poliovirus polyprotein. In other picornavirus reactions Glu may be substituted for Gln, and Ser or Thr for Gly.. Its function is as follows. Autocatalytically cleaves itself from the polyprotein at the L/VP0 junction. Also cleaves the host translation initiation factors EIF4G1 and EIF4G3, in order to shut off the capped cellular mRNA transcription. Plays a role in counteracting host innate antiviral response using diverse mechanisms. Possesses a deubiquitinase activity acting on both 'Lys-48' and 'Lys-63'-linked polyubiquitin chains. In turn, inhibits the ubiquitination and subsequent activation of key signaling molecules of type I IFN response such as host RIGI, TBK1, TRAF3 and TRAF6. Inhibits host NF-kappa-B activity by inducing a decrease in RELA mRNA levels. Cleaves a peptide bond in the C-terminus of host ISG15, resulting in the damaging of this modifier that can no longer be attached to target proteins. Also cleaves host G3BP1 and G3BP2 in order to inhibit cytoplasmic stress granules assembly. Lies on the inner surface of the capsid shell. After binding to the host receptor, the capsid undergoes conformational changes. Capsid protein VP4 is released, capsid protein VP1 N-terminus is externalized, and together, they shape a pore in the host membrane through which the viral genome is translocated into the host cell cytoplasm. After genome has been released, the channel shrinks. In terms of biological role, forms an icosahedral capsid of pseudo T=3 symmetry with capsid proteins VP1 and VP3. The capsid is composed of 60 copies of each capsid protein organized in the form of twelve pentamers and encloses the viral positive strand RNA genome. Upon acidifcation in the endosome, dissociates into pentamers. Functionally, forms an icosahedral capsid of pseudo T=3 symmetry with capsid proteins VP0 and VP3. The capsid is composed of 60 copies of each capsid protein organized in the form of twelve pentamers and encloses the viral positive strand RNA genome. Upon acidifcation in the endosome, dissociates into pentamers. Its function is as follows. Forms an icosahedral capsid of pseudo T=3 symmetry with capsid proteins VP2 and VP3. The capsid is composed of 60 copies of each capsid protein organized in the form of twelve pentamers and encloses the viral positive strand RNA genome. Mediates cell entry by attachment to an integrin receptor, usually host ITGAV/ITGB6. In addition, targets host MAVS to suppress type I IFN pathway. Upon acidifcation in the endosome, dissociates into pentamers. Mediates self-processing of the polyprotein by a translational effect termed 'ribosome skipping'. Mechanistically, 2A-mediated cleavage occurs between the C-terminal glycine and the proline of the downstream protein 2B. In the case of foot-and-mouth disease virus, the 2A oligopeptide is post-translationally 'trimmed' from the C-terminus of the upstream protein 1D by 3C proteinase. In terms of biological role, plays an essential role in the virus replication cycle by acting as a viroporin. Creates a pore in the host endoplasmic reticulum and as a consequence releases Ca2+ in the cytoplasm of infected cell. In turn, high levels of cytoplasmic calcium may trigger membrane trafficking and transport of viral ER-associated proteins to viroplasms, sites of viral genome replication. Functionally, associates with and induces structural rearrangements of intracellular membranes. Triggers host autophagy by interacting with host BECN1 and thereby promotes viral replication. Participates in viral replication and interacts with host DHX9. Displays RNA-binding, nucleotide binding and NTPase activities. May play a role in virion morphogenesis and viral RNA encapsidation by interacting with the capsid protein VP3. Its function is as follows. Plays important roles in virus replication, virulence and host range. Cooperates with host DDX56 to inhibit IRF3 nuclear translocation and subsequent type I interferon production. Covalently linked to the 5'-end of both the positive-strand and negative-strand genomic RNAs. Acts as a genome-linked replication primer. In terms of biological role, cysteine protease that generates mature viral proteins from the precursor polyprotein. In addition to its proteolytic activity, binds to viral RNA and thus influences viral genome replication. RNA and substrate bind cooperatively to the protease. Functionally, RNA-directed RNA polymerase 3D-POL replicates genomic and antigenomic RNA by recognizing replications specific signals. Covalently attaches UMP to a tyrosine of VPg, which is used to prime RNA synthesis. The positive stranded RNA genome is first replicated at virus induced membranous vesicles, creating a dsRNA genomic replication form. This dsRNA is then used as template to synthesize positive stranded RNA genomes. ss(+)RNA genomes are either translated, replicated or encapsidated. The protein is Genome polyprotein of Bos taurus (Bovine).